The sequence spans 408 residues: Argininosuccinate synthase (408 aa).

8 to 16 contributes to the ATP binding site; it reads AYSGGLDTS. L-citrulline is bound at residue Tyr-86. Residue Gly-116 coordinates ATP. Residues Thr-118, Asn-122, and Asp-123 each coordinate L-aspartate. Asn-122 is an L-citrulline binding site. Positions 126, 174, 259, and 271 each coordinate L-citrulline.

It belongs to the argininosuccinate synthase family. Type 1 subfamily. Homotetramer.

Its subcellular location is the cytoplasm. The enzyme catalyses L-citrulline + L-aspartate + ATP = 2-(N(omega)-L-arginino)succinate + AMP + diphosphate + H(+). It functions in the pathway amino-acid biosynthesis; L-arginine biosynthesis; L-arginine from L-ornithine and carbamoyl phosphate: step 2/3. The protein is Argininosuccinate synthase of Leuconostoc mesenteroides subsp. mesenteroides (strain ATCC 8293 / DSM 20343 / BCRC 11652 / CCM 1803 / JCM 6124 / NCDO 523 / NBRC 100496 / NCIMB 8023 / NCTC 12954 / NRRL B-1118 / 37Y).